The primary structure comprises 135 residues: Inner membrane protein YgfX (135 aa).

Topologically, residues 1–11 (MVLWQSDLRVS) are cytoplasmic. Positions 1-96 (MVLWQSDLRV…APWMIKSGMM (96 aa)) are not required to inhibit FtsZ or MreB polymerization. A helical membrane pass occupies residues 12–32 (WRAQWLSLLIHGLVAAVILLM). Topologically, residues 33–37 (PWPLS) are periplasmic. Residues 38 to 54 (YTPLWMVLLSLVVFDCV) traverse the membrane as a helical segment. Over 55 to 135 (RSQRRINARQ…RILLQQETQR (81 aa)) the chain is Cytoplasmic.

As to quaternary structure, interacts with MreB and FtsZ; interaction with the latter requires FtsZ residues 33-49.

It localises to the cell inner membrane. A probable inner membrane protein. Has been shown not to be a toxin, no effects on growth are seen in LB or minimal medium up to 6 or 21 hours (respectively) after induction of expression. Interacts with cytoskeletal proteins FtsZ and MreB; inhibits FtsZ GTP-dependent polymerization as well as MreB ATP-dependent polymerization. Restores production of prodigiosin antibiotic (Pig) in Serratia strains with deletions of sdhE-ygfX; overexpression of this protein and CptB also restores Pig production to a slightly lesser extent in Serratia. This Escherichia coli (strain K12) protein is Inner membrane protein YgfX.